A 1935-amino-acid chain; its full sequence is Myosin-7 (1935 aa).

The region spanning 32–81 (DLKKDVFVPDDKEEFVKATILSREGGKVTAETEHGKTVTVKEDQVLQQNP) is the Myosin N-terminal SH3-like domain. The region spanning 85 to 778 (DKIEDMAMLT…LLGLLEEMRD (694 aa)) is the Myosin motor domain. K129 bears the N6,N6,N6-trimethyllysine mark. Residue 178–185 (GESGAGKT) coordinates ATP. Residue T378 is modified to Phosphothreonine. Actin-binding regions lie at residues 655 to 677 (LNKLMTNLRSTHPHFVRCIIPNE) and 757 to 771 (KFGHTKVFFKAGLLG). The 30-residue stretch at 781–810 (LSRIITRIQAQSRGVLSRMEFKKLLERRDS) folds into the IQ domain. The stretch at 839–1935 (LLKSAETEKE…DIGTKGLNEE (1097 aa)) forms a coiled coil. S1137 and S1269 each carry phosphoserine. T1282 is subject to Phosphothreonine. Phosphotyrosine is present on Y1308. T1309 bears the Phosphothreonine mark. Phosphoserine is present on S1510. Position 1513 is a phosphothreonine (T1513). Residues 1907 to 1935 (EERADIAESQVNKLRAKSRDIGTKGLNEE) are disordered. Over residues 1923-1935 (KSRDIGTKGLNEE) the composition is skewed to basic and acidic residues.

Belongs to the TRAFAC class myosin-kinesin ATPase superfamily. Myosin family. In terms of assembly, muscle myosin is a hexameric protein that consists of 2 heavy chain subunits (MHC), 2 alkali light chain subunits (MLC) and 2 regulatory light chain subunits (MLC-2). Interacts with ECPAS. Interacts (via C-terminus) with LRRC39.

It is found in the cytoplasm. It localises to the myofibril. The protein localises to the sarcomere. Myosins are actin-based motor molecules with ATPase activity essential for muscle contraction. Forms regular bipolar thick filaments that, together with actin thin filaments, constitute the fundamental contractile unit of skeletal and cardiac muscle. This is Myosin-7 (MYH7) from Bos taurus (Bovine).